The primary structure comprises 579 residues: Glutamine--tRNA ligase (579 aa).

The 'HIGH' region motif lies at 41 to 51 (PEPNGYLHIGH). Residues 42–44 (EPN) and 48–54 (HIGHAKA) contribute to the ATP site. The L-glutamine site is built by Asp-74 and Tyr-218. Residues Thr-237, 285 to 286 (RL), and 293 to 295 (MSK) each bind ATP. The 'KMSKS' region motif lies at 292–296 (VMSKR).

Belongs to the class-I aminoacyl-tRNA synthetase family. Monomer.

The protein localises to the cytoplasm. The enzyme catalyses tRNA(Gln) + L-glutamine + ATP = L-glutaminyl-tRNA(Gln) + AMP + diphosphate. The protein is Glutamine--tRNA ligase of Xanthomonas campestris pv. campestris (strain 8004).